A 491-amino-acid polypeptide reads, in one-letter code: Stromelysin-3 (491 aa).

The N-terminal stretch at 1–35 (MARAACLLRAISRALLLPLPLLLLLLLLLPPQLMA) is a signal peptide. Positions 36 to 101 (RARPPENHRH…VLNARNRQKR (66 aa)) are cleaved as a propeptide — activation peptide. The short motif at 82 to 89 (LRCGVPDP) is the Cysteine switch element. Zn(2+)-binding residues include Cys84, His168, and Asp170. 4 residues coordinate Ca(2+): Asp175, Gly176, Gly178, and Ile180. His183, His196, and His218 together coordinate Zn(2+). Residue Glu219 is part of the active site. 2 residues coordinate Zn(2+): His222 and His228. The interval 260 to 279 (YGRPQLTPTSPTPTLSSQAG) is disordered. Over residues 263–277 (PQLTPTSPTPTLSSQ) the composition is skewed to low complexity. Cys297 and Cys483 form a disulfide bridge. 4 Hemopexin repeats span residues 298-342 (ETSF…WQGL), 343-385 (PSPV…KLGL), 387-435 (GSPV…WRGV), and 436-483 (PSEI…FFDC).

The protein belongs to the peptidase M10A family. The cofactor is Ca(2+). It depends on Zn(2+) as a cofactor. Post-translationally, the precursor is cleaved by a furin endopeptidase. As to expression, highly expressed in ovary and uterus.

Its subcellular location is the secreted. The protein localises to the extracellular space. It is found in the extracellular matrix. Its function is as follows. May play an important role in the progression of epithelial malignancies. The chain is Stromelysin-3 (Mmp11) from Rattus norvegicus (Rat).